Consider the following 557-residue polypeptide: Multidrug transporter FLR1 (557 aa).

N33, N48, and N106 each carry an N-linked (GlcNAc...) asparagine glycan. A compositionally biased stretch (low complexity) spans 44–57; the sequence is SESSNMSFNSGSEE. The disordered stretch occupies residues 44–67; that stretch reads SESSNMSFNSGSEENSQEKSVEDL. A run of 8 helical transmembrane segments spans residues 113 to 133, 149 to 169, 181 to 201, 204 to 224, 238 to 258, 271 to 291, 355 to 375, and 387 to 407; these read ALII…SSIY, VVGT…PIVF, LPVY…CALA, FAGL…ALST, LALV…LAPL, WIFW…TFFF, LYIA…PIVF, and GLAY…LLVF. The N-linked (GlcNAc...) asparagine glycan is linked to N418. The next 4 membrane-spanning stretches (helical) occupy residues 426–446, 450–470, 484–506, and 521–541; these read TLIL…MFGW, VHWI…FNIF, YVAS…FPLF, and VAWG…IPFV.

It belongs to the major facilitator superfamily.

The protein localises to the cell membrane. Functionally, multidrug transporter that confers resistance to 5-flucytosine (5-FC) and clotrimazole. Also confers resistance to benomyl, but not 4-nitroquinoline-N-oxide, cycloheximide, or fluconazole. Plays direct roles in extrusion of 5-flucytosine and clotrimazole. This is Multidrug transporter FLR1 from Candida glabrata (strain ATCC 2001 / BCRC 20586 / JCM 3761 / NBRC 0622 / NRRL Y-65 / CBS 138) (Yeast).